Reading from the N-terminus, the 700-residue chain is Methionine--tRNA ligase (700 aa).

The 'HIGH' region signature appears at 13 to 23; the sequence is PYANGDIHLGH. 4 residues coordinate Zn(2+): C144, C147, C157, and C160. The 'KMSKS' region motif lies at 341 to 345; that stretch reads KMSKS. K344 contributes to the ATP binding site. Residues 562 to 587 form a disordered region; it reads QVGAPTASQDDKAAAKNTSPAAMPSS. The segment covering 577-587 has biased composition (polar residues); sequence KNTSPAAMPSS. The tRNA-binding domain maps to 598 to 700; sequence DFAKVEMKVA…DEAVIGDSLA (103 aa).

This sequence belongs to the class-I aminoacyl-tRNA synthetase family. MetG type 1 subfamily. Homodimer. The cofactor is Zn(2+).

It is found in the cytoplasm. It catalyses the reaction tRNA(Met) + L-methionine + ATP = L-methionyl-tRNA(Met) + AMP + diphosphate. Is required not only for elongation of protein synthesis but also for the initiation of all mRNA translation through initiator tRNA(fMet) aminoacylation. In Psychrobacter cryohalolentis (strain ATCC BAA-1226 / DSM 17306 / VKM B-2378 / K5), this protein is Methionine--tRNA ligase.